Here is a 189-residue protein sequence, read N- to C-terminus: UPF0301 protein PFLU_5755 (189 aa).

It belongs to the UPF0301 (AlgH) family.

The sequence is that of UPF0301 protein PFLU_5755 from Pseudomonas fluorescens (strain SBW25).